Here is a 121-residue protein sequence, read N- to C-terminus: Small ribosomal subunit protein uS13 (121 aa).

Residues 92 to 121 form a disordered region; the sequence is RKGLPCRGQRTRTNARTRKGPRKAAQSLKK.

This sequence belongs to the universal ribosomal protein uS13 family. Part of the 30S ribosomal subunit. Forms a loose heterodimer with protein S19. Forms two bridges to the 50S subunit in the 70S ribosome.

Its function is as follows. Located at the top of the head of the 30S subunit, it contacts several helices of the 16S rRNA. In the 70S ribosome it contacts the 23S rRNA (bridge B1a) and protein L5 of the 50S subunit (bridge B1b), connecting the 2 subunits; these bridges are implicated in subunit movement. Contacts the tRNAs in the A and P-sites. This chain is Small ribosomal subunit protein uS13, found in Janthinobacterium sp. (strain Marseille) (Minibacterium massiliensis).